Reading from the N-terminus, the 80-residue chain is Teretoxin Tsu6.5 (80 aa).

The first 21 residues, methionine 1 to leucine 21, serve as a signal peptide directing secretion. Positions glycine 22–arginine 42 are excised as a propeptide.

Belongs to the teretoxin M (TM) superfamily. Contains 3 disulfide bonds. In terms of tissue distribution, expressed by the venom duct.

It localises to the secreted. This is Teretoxin Tsu6.5 from Terebra subulata (Chocolate spotted auger).